The chain runs to 161 residues: Regulator of ribonuclease activity A (161 aa).

It belongs to the RraA family. As to quaternary structure, homotrimer. Binds to both RNA-binding sites in the C-terminal region of Rne and to RhlB.

It localises to the cytoplasm. Functionally, globally modulates RNA abundance by binding to RNase E (Rne) and regulating its endonucleolytic activity. Can modulate Rne action in a substrate-dependent manner by altering the composition of the degradosome. Modulates RNA-binding and helicase activities of the degradosome. The polypeptide is Regulator of ribonuclease activity A (Klebsiella pneumoniae (strain 342)).